The chain runs to 558 residues: Membrane protein insertase YidC (558 aa).

6 consecutive transmembrane segments (helical) span residues 6-26, 326-348, 355-377, 424-444, 469-489, and 512-532; these read VIAA…FFQP, LAID…DYFF, GLAI…NFSF, LPIL…FVTI, VFGL…WPII, and IFMF…AGLV.

This sequence belongs to the OXA1/ALB3/YidC family. Type 1 subfamily. Interacts with the Sec translocase complex via SecD. Specifically interacts with transmembrane segments of nascent integral membrane proteins during membrane integration.

The protein resides in the cell inner membrane. Required for the insertion and/or proper folding and/or complex formation of integral membrane proteins into the membrane. Involved in integration of membrane proteins that insert both dependently and independently of the Sec translocase complex, as well as at least some lipoproteins. Aids folding of multispanning membrane proteins. The sequence is that of Membrane protein insertase YidC from Pelagibacter ubique (strain HTCC1062).